We begin with the raw amino-acid sequence, 382 residues long: E3 ubiquitin-protein ligase RNF133 (382 aa).

Positions 65-167 constitute a PA domain; the sequence is SSILKRVAGV…IKGMEILHLI (103 aa). Residues 190 to 210 traverse the membrane as a helical segment; that stretch reads YFVSFMIVTTATLAYFTFYHI. An RING-type; atypical zinc finger spans residues 256 to 297; that stretch reads CVICFEAYKPNEIVRILTCKHFFHKNCIDPWILAHGTCPMCK. A disordered region spans residues 328–382; it reads TLSPVEEETNYELPPARTSSKVTHVQEHPTSSANAGSQPPEAEETSHPSHGQQVL. The span at 344 to 364 shows a compositional bias: polar residues; the sequence is RTSSKVTHVQEHPTSSANAGS.

As to quaternary structure, interacts with E3 ligase UBE2J1. Auto-ubiquitinated. As to expression, expression is testis-specific.

The protein localises to the endoplasmic reticulum membrane. The enzyme catalyses S-ubiquitinyl-[E2 ubiquitin-conjugating enzyme]-L-cysteine + [acceptor protein]-L-lysine = [E2 ubiquitin-conjugating enzyme]-L-cysteine + N(6)-ubiquitinyl-[acceptor protein]-L-lysine.. It functions in the pathway protein modification; protein ubiquitination. Its function is as follows. Has E3 ubiquitin-protein ligase activity. Plays a role in male fecundity through the interaction with the E2 ubituitin-protein ligase UBE2J1. The polypeptide is E3 ubiquitin-protein ligase RNF133 (Rnf133) (Mus musculus (Mouse)).